The sequence spans 91 residues: Small ribosomal subunit protein uS19 (91 aa).

Belongs to the universal ribosomal protein uS19 family.

Protein S19 forms a complex with S13 that binds strongly to the 16S ribosomal RNA. The sequence is that of Small ribosomal subunit protein uS19 from Synechococcus sp. (strain RCC307).